The chain runs to 308 residues: Solute carrier family 25 member 47 (308 aa).

Solcar repeat units follow at residues 1 to 80, 93 to 206, and 215 to 302; these read MDFV…CLAH, PTKA…LCEW, and PDVP…VLRL. The next 6 helical transmembrane spans lie at 3–23, 49–69, 98–116, 190–210, 217–237, and 273–293; these read FVAG…LDTV, VWGF…VSSV, ITLS…TSPT, GHSF…LSPA, VPGV…VATP, and VLFK…MVVF.

The protein belongs to the mitochondrial carrier (TC 2.A.29) family. In terms of tissue distribution, specifically expressed in liver.

It is found in the mitochondrion inner membrane. The protein localises to the mitochondrion outer membrane. It carries out the reaction NAD(+)(in) = NAD(+)(out). The enzyme catalyses acetyl-CoA(in) = acetyl-CoA(out). Mitochondrial NAD(+) transporter that acts as a 'metabolic gate' in hepatic lipogenesis. Provides NAD(+) substrate to mitochondrial SIRT3 deacetylase and enables its NAD(+)-dependent activities in mitochondrial energy metabolism. This triggers downstream activation of PRKAA1/AMPK-alpha signaling cascade that negatively regulates sterol regulatory element-binding protein (SREBP) transcriptional activities and ATP-consuming lipogenesis to restore cellular energy balance. May transport other mitochondrial metabolites having an aromatic nucleotide and phosphate groups, such as acetyl-CoA. Does not transport amino acids. The transport mechanism remains to be elucidated. The protein is Solute carrier family 25 member 47 of Homo sapiens (Human).